The sequence spans 345 residues: MISPVLILFSSFLCHVAIAGRTCPKPDDLPFSTVVPLKTFYEPGEEITYSCKPGYVSRGGMRKFICPLTGLWPINTLKCTPRVCPFAGILENGAVRYTTFEYPNTISFSCNTGFYLNGADSAKCTEEGKWSPELPVCAPITCPPPSIPTFATLHVYKPSAGNNSLYRDTAVFECLPQHAMFGNDTITCTTHGNWTKLPECREVKCPFPSRPDNGFVNYPAKPTLYYKDKATFGCHDGYSLDGPEEIECTKLGNWSAMPSCKASCKVPVKKATVVYQGERVKIQEKFKNGMLHGDKVSFFCKNKEKKCSYTEDAQCIDGTIEVPKCFKEHSSLAFWKTDASDVKPC.

The N-terminal stretch at 1 to 19 is a signal peptide; it reads MISPVLILFSSFLCHVAIA. 4 Sushi domains span residues 21-81, 82-139, 140-202, and 203-262; these read RTCP…KCTP, RVCP…VCAP, ITCP…ECRE, and VKCP…SCKA. 11 cysteine pairs are disulfide-bonded: cysteine 23–cysteine 66, cysteine 51–cysteine 79, cysteine 84–cysteine 124, cysteine 110–cysteine 137, cysteine 142–cysteine 188, cysteine 174–cysteine 200, cysteine 205–cysteine 248, cysteine 234–cysteine 260, cysteine 264–cysteine 315, cysteine 300–cysteine 325, and cysteine 307–cysteine 345. O-linked (GalNAc...) threonine glycosylation is present at threonine 33. O-linked (GalNAc...) threonine glycosylation occurs at threonine 149. Asparagine 162, asparagine 183, and asparagine 193 each carry an N-linked (GlcNAc...) asparagine glycan. A glycan (N-linked (GlcNAc...) asparagine) is linked at asparagine 253. The interval 263–345 is sushi-like; it reads SCKVPVKKAT…KTDASDVKPC (83 aa).

In terms of tissue distribution, expressed by the liver and secreted in plasma.

Its subcellular location is the secreted. Binds to various kinds of negatively charged substances such as heparin, phospholipids, and dextran sulfate. May prevent activation of the intrinsic blood coagulation cascade by binding to phospholipids on the surface of damaged cells. This chain is Beta-2-glycoprotein 1 (APOH), found in Pan troglodytes (Chimpanzee).